We begin with the raw amino-acid sequence, 498 residues long: Probable dipeptidase B (498 aa).

The active site involves Cys-26.

The protein belongs to the peptidase C69 family.

The catalysed reaction is an L-aminoacyl-L-amino acid + H2O = 2 an L-alpha-amino acid. The polypeptide is Probable dipeptidase B (pepDB) (Streptococcus pyogenes serotype M1).